The primary structure comprises 149 residues: Protegrin-5 (149 aa).

Residues M1–A29 form the signal peptide. A propeptide spanning residues Q30–V130 is cleaved from the precursor. The tract at residues D61–V80 is disordered. Intrachain disulfides connect C85-C96, C107-C124, C136-C145, and C138-C143. Residue R148 is modified to Arginine amide.

This sequence belongs to the cathelicidin family.

The protein localises to the secreted. Its function is as follows. Microbicidal activity. The polypeptide is Protegrin-5 (NPG5) (Sus scrofa (Pig)).